The sequence spans 320 residues: ATP-dependent 6-phosphofructokinase (320 aa).

ATP is bound by residues Gly11, 72–73 (RY), and 102–105 (GDGS). Asp103 contributes to the Mg(2+) binding site. Residues 125–127 (TID), Arg162, 169–171 (MGR), Glu222, Arg243, and 249–252 (HMQR) contribute to the substrate site. Asp127 serves as the catalytic Proton acceptor.

This sequence belongs to the phosphofructokinase type A (PFKA) family. ATP-dependent PFK group I subfamily. Prokaryotic clade 'B1' sub-subfamily. In terms of assembly, homotetramer. It depends on Mg(2+) as a cofactor.

It is found in the cytoplasm. It carries out the reaction beta-D-fructose 6-phosphate + ATP = beta-D-fructose 1,6-bisphosphate + ADP + H(+). Its pathway is carbohydrate degradation; glycolysis; D-glyceraldehyde 3-phosphate and glycerone phosphate from D-glucose: step 3/4. Allosterically activated by ADP and other diphosphonucleosides, and allosterically inhibited by phosphoenolpyruvate. Its function is as follows. Catalyzes the phosphorylation of D-fructose 6-phosphate to fructose 1,6-bisphosphate by ATP, the first committing step of glycolysis. This Lactiplantibacillus plantarum (strain ATCC BAA-793 / NCIMB 8826 / WCFS1) (Lactobacillus plantarum) protein is ATP-dependent 6-phosphofructokinase.